Here is a 111-residue protein sequence, read N- to C-terminus: Large ribosomal subunit protein uL22 (111 aa).

It belongs to the universal ribosomal protein uL22 family. Part of the 50S ribosomal subunit.

Functionally, this protein binds specifically to 23S rRNA; its binding is stimulated by other ribosomal proteins, e.g. L4, L17, and L20. It is important during the early stages of 50S assembly. It makes multiple contacts with different domains of the 23S rRNA in the assembled 50S subunit and ribosome. In terms of biological role, the globular domain of the protein is located near the polypeptide exit tunnel on the outside of the subunit, while an extended beta-hairpin is found that lines the wall of the exit tunnel in the center of the 70S ribosome. This is Large ribosomal subunit protein uL22 from Alkalilimnicola ehrlichii (strain ATCC BAA-1101 / DSM 17681 / MLHE-1).